We begin with the raw amino-acid sequence, 466 residues long: ATP synthase subunit beta (466 aa).

155–162 is an ATP binding site; that stretch reads GGAGVGKT.

Belongs to the ATPase alpha/beta chains family. As to quaternary structure, F-type ATPases have 2 components, CF(1) - the catalytic core - and CF(0) - the membrane proton channel. CF(1) has five subunits: alpha(3), beta(3), gamma(1), delta(1), epsilon(1). CF(0) has three main subunits: a(1), b(2) and c(9-12). The alpha and beta chains form an alternating ring which encloses part of the gamma chain. CF(1) is attached to CF(0) by a central stalk formed by the gamma and epsilon chains, while a peripheral stalk is formed by the delta and b chains.

The protein resides in the cell inner membrane. It catalyses the reaction ATP + H2O + 4 H(+)(in) = ADP + phosphate + 5 H(+)(out). Produces ATP from ADP in the presence of a proton gradient across the membrane. The catalytic sites are hosted primarily by the beta subunits. The polypeptide is ATP synthase subunit beta (Bordetella petrii (strain ATCC BAA-461 / DSM 12804 / CCUG 43448)).